The chain runs to 101 residues: Eukaryotic translation initiation factor 4E-binding protein 3 (101 aa).

A disordered region spans residues 1-28 (MSSSTSCPIPGCRDQLPDGYSTTPGGTL). The YXXXXLphi motif motif lies at 40–46 (YDRKFLL). The TOS motif motif lies at 97 to 101 (FEMDM).

The protein belongs to the eIF4E-binding protein family. In terms of assembly, interacts with EIF4E. Interacts with RPA2 (via N-terminus); the interaction enhances EIF4EBP3-mediated inhibition of EIF4E-mediated mRNA nuclear export. In terms of processing, phosphorylated.

It localises to the cytoplasm. The protein resides in the nucleus. Functionally, repressor of translation initiation that regulates EIF4E activity by preventing its assembly into the eIF4F complex: the hypophosphorylated form competes with EIF4G1/EIF4G3 and strongly binds to EIF4E, leading to repression of translation. In contrast, the hyperphosphorylated form dissociates from EIF4E, allowing interaction between EIF4G1/EIF4G3 and EIF4E, leading to initiation of translation. Inhibits EIF4E-mediated mRNA nuclear export. This chain is Eukaryotic translation initiation factor 4E-binding protein 3 (Eif4ebp3), found in Mus musculus (Mouse).